The sequence spans 232 residues: Large ribosomal subunit protein uL1 (232 aa).

It belongs to the universal ribosomal protein uL1 family. As to quaternary structure, part of the 50S ribosomal subunit.

In terms of biological role, binds directly to 23S rRNA. The L1 stalk is quite mobile in the ribosome, and is involved in E site tRNA release. Functionally, protein L1 is also a translational repressor protein, it controls the translation of the L11 operon by binding to its mRNA. The sequence is that of Large ribosomal subunit protein uL1 from Burkholderia vietnamiensis (strain G4 / LMG 22486) (Burkholderia cepacia (strain R1808)).